The chain runs to 463 residues: Hexose-6-phosphate:phosphate antiporter (463 aa).

Residues 1-24 (MLAFLNQVRKPTLDLPLEVRRKMW) lie on the Cytoplasmic side of the membrane. Residues 25–45 (FKPFMQSYLVVFIGYLTMYLI) traverse the membrane as a helical segment. Over 46 to 60 (RKNFNIAQNDMISTY) the chain is Periplasmic. The helical transmembrane segment at 61-81 (GLSMTQLGMIGLGFSITYGVG) threads the bilayer. Topologically, residues 82–96 (KTLVSYYADGKNTKQ) are cytoplasmic. Residues 97–117 (FLPFMLILSAICMLGFSASMG) form a helical membrane-spanning segment. Topologically, residues 118–120 (SGS) are periplasmic. A helical membrane pass occupies residues 121 to 141 (VSLFLMIAFYALSGFFQSTGG). Over 142–159 (SCSYSTITKWTPRRKRGT) the chain is Cytoplasmic. A helical membrane pass occupies residues 160–180 (FLGFWNISHNLGGAGAAGVAL). The Periplasmic portion of the chain corresponds to 181 to 189 (FGANYLFDG). A helical transmembrane segment spans residues 190–210 (HVIGMFIFPSIIALIVGFIGL). The Cytoplasmic portion of the chain corresponds to 211–259 (RYGSDSPESYGLGKAEELFGEEISEEDKETESTDMTKWQIFVEYVLKNK). The chain crosses the membrane as a helical span at residues 260-280 (VIWLLCFANIFLYVVRIGIDQ). Residues 281 to 297 (WSTVYAFQELKLSKAVA) lie on the Periplasmic side of the membrane. The chain crosses the membrane as a helical span at residues 298–318 (IQGFTLFEAGALVGTLLWGWL). At 319-326 (SDLANGRR) the chain is on the cytoplasmic side. A helical membrane pass occupies residues 327 to 347 (GLVACIALALIIATLGVYQHA). Residues 348–357 (SNEYIYLASL) lie on the Periplasmic side of the membrane. A helical transmembrane segment spans residues 358-378 (FALGFLVFGPQLLIGVAAVGF). Residues 379–382 (VPKK) lie on the Cytoplasmic side of the membrane. The helical transmembrane segment at 383-403 (AIGAADGIKGTFAYLIGDSFA) threads the bilayer. Topologically, residues 404–425 (KLGLGMIADGTPVFGLTGWAGT) are periplasmic. A helical membrane pass occupies residues 426–446 (FAALDIAAIGCICLMAIVAVM). Residues 447-463 (EERKIRREKKIQQLTVA) lie on the Cytoplasmic side of the membrane.

The protein belongs to the major facilitator superfamily. Organophosphate:Pi antiporter (OPA) (TC 2.A.1.4) family.

Its subcellular location is the cell inner membrane. Its function is as follows. Mediates the exchange of external hexose 6-phosphate and internal inorganic phosphate. In Escherichia coli O157:H7, this protein is Hexose-6-phosphate:phosphate antiporter (uhpT).